The chain runs to 474 residues: UDP-N-acetylmuramoyl-L-alanyl-D-glutamate--2,6-diaminopimelate ligase (474 aa).

S21 provides a ligand contact to UDP-N-acetyl-alpha-D-muramoyl-L-alanyl-D-glutamate. G93 to S99 is a binding site for ATP. UDP-N-acetyl-alpha-D-muramoyl-L-alanyl-D-glutamate is bound by residues T139–T140, S166, Q172, and R174. K206 carries the N6-carboxylysine modification. Meso-2,6-diaminopimelate is bound by residues R367, D391–R394, G441, and E445. Positions D391–R394 match the Meso-diaminopimelate recognition motif motif.

It belongs to the MurCDEF family. MurE subfamily. Mg(2+) serves as cofactor. In terms of processing, carboxylation is probably crucial for Mg(2+) binding and, consequently, for the gamma-phosphate positioning of ATP.

It localises to the cytoplasm. The catalysed reaction is UDP-N-acetyl-alpha-D-muramoyl-L-alanyl-D-glutamate + meso-2,6-diaminopimelate + ATP = UDP-N-acetyl-alpha-D-muramoyl-L-alanyl-gamma-D-glutamyl-meso-2,6-diaminopimelate + ADP + phosphate + H(+). The protein operates within cell wall biogenesis; peptidoglycan biosynthesis. Functionally, catalyzes the addition of meso-diaminopimelic acid to the nucleotide precursor UDP-N-acetylmuramoyl-L-alanyl-D-glutamate (UMAG) in the biosynthesis of bacterial cell-wall peptidoglycan. The sequence is that of UDP-N-acetylmuramoyl-L-alanyl-D-glutamate--2,6-diaminopimelate ligase from Rickettsia bellii (strain RML369-C).